Consider the following 277-residue polypeptide: Phosphoenolpyruvate synthase regulatory protein (277 aa).

157 to 164 (GVSRCGKT) provides a ligand contact to ADP.

Belongs to the pyruvate, phosphate/water dikinase regulatory protein family. PSRP subfamily.

It carries out the reaction [pyruvate, water dikinase] + ADP = [pyruvate, water dikinase]-phosphate + AMP + H(+). It catalyses the reaction [pyruvate, water dikinase]-phosphate + phosphate + H(+) = [pyruvate, water dikinase] + diphosphate. Bifunctional serine/threonine kinase and phosphorylase involved in the regulation of the phosphoenolpyruvate synthase (PEPS) by catalyzing its phosphorylation/dephosphorylation. The polypeptide is Phosphoenolpyruvate synthase regulatory protein (Shigella boydii serotype 4 (strain Sb227)).